Consider the following 743-residue polypeptide: Ovocleidin-116 (743 aa).

A signal peptide spans 1-18 (MRATLFCLCLCLLGTVLP). A disulfide bridge connects residues C31 and C42. N62 is a glycosylation site (N-linked (GlcNAc...) asparagine). The segment at 68-225 (KEEGDHQGTI…GTMGTGDSAI (158 aa)) is disordered. Residues 129-141 (DSNSVYPTSTSVE) show a composition bias toward polar residues. The segment covering 169–179 (GPHGDGDGGNG) has biased composition (gly residues). N-linked (GlcNAc...) asparagine; partial glycosylation occurs at N293. Disordered regions lie at residues 333 to 356 (GDSV…ATEI), 385 to 454 (SGKG…GPER), 505 to 534 (ARTQ…QQEV), 549 to 577 (RHRA…STGG), 628 to 649 (DPWV…TVAG), and 692 to 743 (SGVG…RQSL). Residues 402–420 (ATMTTRGGRGTASSGLTTG) show a composition bias toward low complexity. A compositionally biased stretch (polar residues) spans 421–431 (DCSTAASTPSR). Over residues 549 to 558 (RHRARVRPES) the composition is skewed to basic and acidic residues.

It belongs to the osteoregulin family. Post-translationally, asn-62 is fully glycosylated, whereas only less than 10% of Asn-293 seem to be glycosylated. In terms of tissue distribution, in the eggshell, expressed mainly in the palisade and mammillary layers. Expression also detected in the hypertrophic zone of the epiphyseal growth plate, and in cortical and medullary bone (at protein level). Highly expressed in uterus. Not detected in the proximal oviduct, liver, magnum, duodenum and kidney.

It localises to the secreted. The protein resides in the extracellular space. Its subcellular location is the extracellular matrix. Functionally, major component of the eggshell matrix. May play an important role in the regulation of calcite growth during eggshell calcification. May also regulate the mineralization process in developing and growing bones. The chain is Ovocleidin-116 from Gallus gallus (Chicken).